The sequence spans 215 residues: Cytochrome b6 (215 aa).

A helical transmembrane segment spans residues 32-52 (IFYCLGGITLTCFLVQVATGF). C35 is a binding site for heme c. H86 and H100 together coordinate heme b. Transmembrane regions (helical) follow at residues 90 to 110 (ASMMVLMMILHIFRVYLTGGF), 116 to 136 (LTWVTGVILAVLTVSFGVTGY), and 186 to 206 (LHTFVLPLLTAVFMLMHFLMI). The heme b site is built by H187 and H202.

The protein belongs to the cytochrome b family. PetB subfamily. In terms of assembly, the 4 large subunits of the cytochrome b6-f complex are cytochrome b6, subunit IV (17 kDa polypeptide, PetD), cytochrome f and the Rieske protein, while the 4 small subunits are PetG, PetL, PetM and PetN. The complex functions as a dimer. Heme b serves as cofactor. The cofactor is heme c.

Its subcellular location is the plastid. The protein resides in the chloroplast thylakoid membrane. In terms of biological role, component of the cytochrome b6-f complex, which mediates electron transfer between photosystem II (PSII) and photosystem I (PSI), cyclic electron flow around PSI, and state transitions. The polypeptide is Cytochrome b6 (Physcomitrium patens (Spreading-leaved earth moss)).